The following is a 275-amino-acid chain: Beta-lactamase OXA-3 (275 aa).

Residues 1 to 21 (MAIRIFAILFSTFVFGTFAHA) form the signal peptide. Ser-72 serves as the catalytic Acyl-ester intermediate. Lys-75 carries the N6-carboxylysine modification. Residue 210–212 (KTG) participates in substrate binding.

The protein belongs to the class-D beta-lactamase family.

The catalysed reaction is a beta-lactam + H2O = a substituted beta-amino acid. This is an oxacillin-hydrolyzing beta-lactamase. In Pseudomonas aeruginosa, this protein is Beta-lactamase OXA-3 (bla).